We begin with the raw amino-acid sequence, 141 residues long: Large ribosomal subunit protein uL11 (141 aa).

This sequence belongs to the universal ribosomal protein uL11 family. Part of the ribosomal stalk of the 50S ribosomal subunit. Interacts with L10 and the large rRNA to form the base of the stalk. L10 forms an elongated spine to which L12 dimers bind in a sequential fashion forming a multimeric L10(L12)X complex. Post-translationally, one or more lysine residues are methylated.

In terms of biological role, forms part of the ribosomal stalk which helps the ribosome interact with GTP-bound translation factors. The sequence is that of Large ribosomal subunit protein uL11 from Herpetosiphon aurantiacus (strain ATCC 23779 / DSM 785 / 114-95).